The sequence spans 398 residues: S-adenosylmethionine synthase (398 aa).

Histidine 17 is a binding site for ATP. Mg(2+) is bound at residue aspartate 19. Glutamate 45 contributes to the K(+) binding site. Positions 58 and 101 each coordinate L-methionine. A flexible loop region spans residues 101-111 (QSPDIAQGVDK). ATP-binding positions include 176–178 (DGK), 243–244 (RF), aspartate 252, 258–259 (RK), and lysine 279. Aspartate 252 serves as a coordination point for L-methionine. Residue lysine 283 coordinates L-methionine.

Belongs to the AdoMet synthase family. In terms of assembly, homotetramer; dimer of dimers. Mg(2+) is required as a cofactor. The cofactor is K(+).

It is found in the cytoplasm. The enzyme catalyses L-methionine + ATP + H2O = S-adenosyl-L-methionine + phosphate + diphosphate. It functions in the pathway amino-acid biosynthesis; S-adenosyl-L-methionine biosynthesis; S-adenosyl-L-methionine from L-methionine: step 1/1. In terms of biological role, catalyzes the formation of S-adenosylmethionine (AdoMet) from methionine and ATP. The overall synthetic reaction is composed of two sequential steps, AdoMet formation and the subsequent tripolyphosphate hydrolysis which occurs prior to release of AdoMet from the enzyme. This is S-adenosylmethionine synthase from Staphylococcus haemolyticus (strain JCSC1435).